Reading from the N-terminus, the 280-residue chain is Fructose-1,6-bisphosphatase class 1 (280 aa).

Mg(2+) contacts are provided by E64, D83, L85, and D86. Substrate contacts are provided by residues 86–89, Y190, and K221; that span reads DGSS. Residue E227 coordinates Mg(2+).

Belongs to the FBPase class 1 family. Homotetramer. The cofactor is Mg(2+).

The protein resides in the cytoplasm. The enzyme catalyses beta-D-fructose 1,6-bisphosphate + H2O = beta-D-fructose 6-phosphate + phosphate. It functions in the pathway carbohydrate biosynthesis; gluconeogenesis. This Campylobacter hominis (strain ATCC BAA-381 / DSM 21671 / CCUG 45161 / LMG 19568 / NCTC 13146 / CH001A) protein is Fructose-1,6-bisphosphatase class 1.